A 129-amino-acid chain; its full sequence is Large ribosomal subunit protein uL14m (129 aa).

Belongs to the universal ribosomal protein uL14 family. In terms of assembly, component of the mitochondrial ribosome large subunit (39S) which comprises a 16S rRNA and about 50 distinct proteins.

The protein localises to the mitochondrion. This is Large ribosomal subunit protein uL14m (mrpl14) from Dictyostelium discoideum (Social amoeba).